Consider the following 559-residue polypeptide: Methionine--tRNA ligase (559 aa).

The 'HIGH' region motif lies at 10 to 20 (PYINAVPHLGT). Residues Cys141, Cys144, Cys154, and Cys157 each contribute to the Zn(2+) site. A 'KMSKS' region motif is present at residues 331 to 335 (KFSKS). Residue Lys334 coordinates ATP.

It belongs to the class-I aminoacyl-tRNA synthetase family. MetG type 1 subfamily. Requires Zn(2+) as cofactor.

The protein resides in the cytoplasm. It catalyses the reaction tRNA(Met) + L-methionine + ATP = L-methionyl-tRNA(Met) + AMP + diphosphate. In terms of biological role, is required not only for elongation of protein synthesis but also for the initiation of all mRNA translation through initiator tRNA(fMet) aminoacylation. The sequence is that of Methionine--tRNA ligase from Korarchaeum cryptofilum (strain OPF8).